Reading from the N-terminus, the 529-residue chain is DNA-binding protein (529 aa).

Residues 1–17 show a composition bias toward basic and acidic residues; sequence MASREEEQRETTPERGR. Disordered stretches follow at residues 1–108 and 125–168; these read MASR…VDSE and PVLI…SEST. Positions 129-139 are enriched in basic residues; it reads KHGKGGKRTVR. Over residues 140 to 155 the composition is skewed to basic and acidic residues; the sequence is RLNEDDPVARGMRTQE. The segment covering 156–165 has biased composition (acidic residues); it reads EKEESSEAES. Y195 carries the phosphotyrosine; by host modification. Zn(2+) is bound by residues C284 and H286. Residues 297–331 are flexible loop; it reads IEMDVTSENGQRALKEQSSKAKIVKNRWGRNVVQI. Zn(2+)-binding residues include C339, C355, C396, C398, C450, and C467. The interval 513 to 529 is C-terminal arm, DBP binding; sequence VSLPVAHSDARQNPFDF.

It belongs to the adenoviridae E2A DNA-binding protein family. In terms of assembly, homomultimerizes on viral ssDNA bound to pTP. Forms an initiation complex with viral polymerase, pTP and hosts NFIA and POU2F1/OCT1. Interacts with host SRCAP.

It localises to the host nucleus. Functionally, plays a role in the elongation phase of viral strand displacement replication by unwinding the template in an ATP-independent fashion, employing its capacity to form multimers. Also enhances the rate of initiation. Released from template upon second strand synthesis. Assembles in complex with viral pTP, viral pol, host NFIA and host POU2F1/OCT1 on viral origin of replication. Covers the whole ssDNA genome during synthesis. The complementary strand synthesis induces its release from DNA template. May inhibit cellular transcription mediated by the interaction between host SRCAP and CBP. This chain is DNA-binding protein, found in Human adenovirus C serotype 2 (HAdV-2).